The following is a 270-amino-acid chain: Acyl-[acyl-carrier-protein]--UDP-N-acetylglucosamine O-acyltransferase (270 aa).

The protein belongs to the transferase hexapeptide repeat family. LpxA subfamily. Homotrimer.

The protein localises to the cytoplasm. The enzyme catalyses a (3R)-hydroxyacyl-[ACP] + UDP-N-acetyl-alpha-D-glucosamine = a UDP-3-O-[(3R)-3-hydroxyacyl]-N-acetyl-alpha-D-glucosamine + holo-[ACP]. Its pathway is glycolipid biosynthesis; lipid IV(A) biosynthesis; lipid IV(A) from (3R)-3-hydroxytetradecanoyl-[acyl-carrier-protein] and UDP-N-acetyl-alpha-D-glucosamine: step 1/6. Involved in the biosynthesis of lipid A, a phosphorylated glycolipid that anchors the lipopolysaccharide to the outer membrane of the cell. The protein is Acyl-[acyl-carrier-protein]--UDP-N-acetylglucosamine O-acyltransferase of Bartonella tribocorum (strain CIP 105476 / IBS 506).